Reading from the N-terminus, the 323-residue chain is MSDRILCKFFVHGSCLKGENCEFSHDSKDPPNNVCTFYQKRICLYGSRCRYDHVRAASNLPLSSDSESLDRSISTTPSRHLQQQGDNNDGDKSSNVYCIHPREYPICSFAAAGDCPRGNQCPHMHGDLCNTCGKKCLHPFRPEEREEHTKECEKKQKHIEALKQSQDIECSVCLDRILSKATPGERKFGLLTECDHPFCIQCIRNWRSSAPVSGMDVNSTLRACPICRKLSYFVVPSVVWYSSPEEKKEIIDIYKAKLRSIDCKHFNFGNGNCPFGASCFYKHAYSDGHLEEVVLRHLGSQEGETVITDSIRLSEFLGGLQIF.

C3H1-type zinc fingers lie at residues 1–28 and 29–56; these read MSDR…HDSK and DPPN…HVRA. The span at 62–74 shows a compositional bias: low complexity; the sequence is LSSDSESLDRSIS. Residues 62–92 form a disordered region; the sequence is LSSDSESLDRSISTTPSRHLQQQGDNNDGDK. Positions 75-87 are enriched in polar residues; it reads TTPSRHLQQQGDN. The segment at 101-128 adopts a C3H1-type 3 zinc-finger fold; that stretch reads PREYPICSFAAAGDCPRGNQCPHMHGDL. Residues 129–158 are makorin-type Cys-His; sequence CNTCGKKCLHPFRPEEREEHTKECEKKQKH. The segment at 170 to 228 adopts an RING-type zinc-finger fold; the sequence is CSVCLDRILSKATPGERKFGLLTECDHPFCIQCIRNWRSSAPVSGMDVNSTLRACPICR. The C3H1-type 4 zinc finger occupies 257-286; it reads KLRSIDCKHFNFGNGNCPFGASCFYKHAYS.

It catalyses the reaction S-ubiquitinyl-[E2 ubiquitin-conjugating enzyme]-L-cysteine + [acceptor protein]-L-lysine = [E2 ubiquitin-conjugating enzyme]-L-cysteine + N(6)-ubiquitinyl-[acceptor protein]-L-lysine.. The protein operates within protein modification; protein ubiquitination. In terms of biological role, E3 ubiquitin ligase catalyzing the covalent attachment of ubiquitin moieties onto substrate proteins. This Arabidopsis thaliana (Mouse-ear cress) protein is E3 ubiquitin-protein ligase makorin (MKRN).